The sequence spans 473 residues: Ribulose bisphosphate carboxylase large chain 1 (473 aa).

Residues Asn-116 and Thr-166 each coordinate substrate. The Proton acceptor role is filled by Lys-168. Substrate is bound at residue Lys-170. Residues Lys-194, Asp-196, and Glu-197 each coordinate Mg(2+). An N6-carboxylysine modification is found at Lys-194. Catalysis depends on His-287, which acts as the Proton acceptor. Substrate is bound by residues Arg-288, His-320, and Ser-372.

This sequence belongs to the RuBisCO large chain family. Type I subfamily. In terms of assembly, heterohexadecamer of 8 large chains and 8 small chains. Mg(2+) is required as a cofactor.

It carries out the reaction 2 (2R)-3-phosphoglycerate + 2 H(+) = D-ribulose 1,5-bisphosphate + CO2 + H2O. It catalyses the reaction D-ribulose 1,5-bisphosphate + O2 = 2-phosphoglycolate + (2R)-3-phosphoglycerate + 2 H(+). In terms of biological role, ruBisCO catalyzes two reactions: the carboxylation of D-ribulose 1,5-bisphosphate, the primary event in carbon dioxide fixation, as well as the oxidative fragmentation of the pentose substrate. Both reactions occur simultaneously and in competition at the same active site. This Nitrobacter winogradskyi (strain ATCC 25391 / DSM 10237 / CIP 104748 / NCIMB 11846 / Nb-255) protein is Ribulose bisphosphate carboxylase large chain 1.